Consider the following 291-residue polypeptide: m-AAA protease-interacting protein 1, mitochondrial (291 aa).

Residues 1 to 96 (MALAARLLPQ…SFPACPQRSY (96 aa)) constitute a mitochondrion transit peptide.

As to quaternary structure, interacts with AFG3L2. Interacts with SPG7. Interacts with SMDT1/EMRE (via the N-terminal transit peptide); interaction is direct and takes place before maturation of SMDT1/EMRE.

It localises to the mitochondrion matrix. Functionally, promotes sorting of SMDT1/EMRE in mitochondria by ensuring its maturation. Interacts with the transit peptide region of SMDT1/EMRE precursor protein in the mitochondrial matrix, leading to protect it against protein degradation by YME1L1, thereby ensuring SMDT1/EMRE maturation by the mitochondrial processing peptidase (PMPCA and PMPCB). In Homo sapiens (Human), this protein is m-AAA protease-interacting protein 1, mitochondrial.